Reading from the N-terminus, the 388-residue chain is Probable proton-coupled zinc antiporter SLC30A3 (388 aa).

The disordered stretch occupies residues 1-41; the sequence is MEPSLATGGSETTRLVSARDRSSAGGGLRLKSLFTEPSEPL. Residues 1 to 75 lie on the Cytoplasmic side of the membrane; it reads MEPSLATGGS…SPERVQARRQ (75 aa). Phosphoserine occurs at positions 63 and 66. The helical transmembrane segment at 76–96 threads the bilayer; it reads LYAACAVCFIFMAGEVVGGYL. Residues 97–105 are Lumenal-facing; it reads AHSLAIMTD. A helical membrane pass occupies residues 106 to 126; it reads AAHLLADIGSMLASLFSLWLS. 2 residues coordinate Zn(2+): histidine 108 and aspartate 112. The Cytoplasmic portion of the chain corresponds to 127–145; sequence TRPATRTMTFGWHRSETLG. Residues 146-166 traverse the membrane as a helical segment; the sequence is ALASVVSLWIVTGILLYLAFL. Over 167-177 the chain is Lumenal; sequence RLLHSDYHIEA. The chain crosses the membrane as a helical span at residues 178 to 198; it reads GAMLLTASIAVCANLLMAFVL. The Cytoplasmic portion of the chain corresponds to 199-235; that stretch reads HQTGAPHSHGSTGAEYAPLEEGHGYPMSLGNTSVRAA. Residues 236-256 traverse the membrane as a helical segment; that stretch reads FVHVLGDLLQSFGVLAASILI. Zn(2+)-binding residues include histidine 238 and aspartate 242. At 257 to 263 the chain is on the lumenal side; the sequence is YFKPQYK. The chain crosses the membrane as a helical span at residues 264–284; that stretch reads VADPISTFLFSICALGSTAPT. Topologically, residues 285-388 are cytoplasmic; that stretch reads LRDVLLVLME…CLRCQEPSQA (104 aa).

Belongs to the cation diffusion facilitator (CDF) transporter (TC 2.A.4) family. SLC30A subfamily. In terms of assembly, homodimer. Homodimerization is negligible compared to the human protein. It could explain the lower efficiency of zinc transport. Interacts with TMEM163. As to expression, expression is restricted to brain (at protein level). In the brain, most abundant in hippocampus and cerebral cortex. The mRNA is also detected in testis, expression being restricted to germ cells and highest in pachytene spermatocytes and round spermatids.

It localises to the cytoplasmic vesicle. It is found in the secretory vesicle. The protein localises to the synaptic vesicle membrane. The protein resides in the synapse. Its subcellular location is the synaptosome. It localises to the late endosome membrane. It is found in the lysosome membrane. It catalyses the reaction Zn(2+)(in) + 2 H(+)(out) = Zn(2+)(out) + 2 H(+)(in). Its function is as follows. Probable proton-coupled zinc ion antiporter mediating the import of zinc from cytoplasm into synaptic vesicles and participating to cellular zinc ion homeostasis in the brain. The chain is Probable proton-coupled zinc antiporter SLC30A3 from Mus musculus (Mouse).